We begin with the raw amino-acid sequence, 508 residues long: Glycerol kinase (508 aa).

Thr-14 provides a ligand contact to ADP. ATP is bound by residues Thr-14, Thr-15, and Ser-16. Thr-14 provides a ligand contact to sn-glycerol 3-phosphate. ADP is bound at residue Arg-18. Sn-glycerol 3-phosphate-binding residues include Arg-84, Glu-85, and Tyr-136. Glycerol is bound by residues Arg-84, Glu-85, and Tyr-136. Position 232 is a phosphohistidine; by HPr (His-232). A sn-glycerol 3-phosphate-binding site is contributed by Asp-246. Asp-246 and Gln-247 together coordinate glycerol. ADP-binding residues include Thr-268 and Gly-311. ATP is bound by residues Thr-268, Gly-311, Gln-315, and Gly-412. Gly-412 and Asn-416 together coordinate ADP.

The protein belongs to the FGGY kinase family. Homotetramer and homodimer (in equilibrium). In terms of processing, the phosphoenolpyruvate-dependent sugar phosphotransferase system (PTS), including enzyme I, and histidine-containing protein (HPr) are required for the phosphorylation, which leads to the activation of the enzyme.

It catalyses the reaction glycerol + ATP = sn-glycerol 3-phosphate + ADP + H(+). It participates in polyol metabolism; glycerol degradation via glycerol kinase pathway; sn-glycerol 3-phosphate from glycerol: step 1/1. Its activity is regulated as follows. Activated by phosphorylation and inhibited by fructose 1,6-bisphosphate (FBP). Its function is as follows. Key enzyme in the regulation of glycerol uptake and metabolism. Catalyzes the phosphorylation of glycerol to yield sn-glycerol 3-phosphate. The protein is Glycerol kinase of Streptococcus pyogenes serotype M28 (strain MGAS6180).